We begin with the raw amino-acid sequence, 493 residues long: Glycerol kinase (493 aa).

T13 is an ADP binding site. Residues T13, T14, and S15 each contribute to the ATP site. Sn-glycerol 3-phosphate is bound at residue T13. R17 serves as a coordination point for ADP. Residues R83, E84, Y135, and D244 each coordinate sn-glycerol 3-phosphate. Positions 83, 84, 135, 244, and 245 each coordinate glycerol. The ADP site is built by T266 and G309. T266, G309, Q313, and G410 together coordinate ATP. Residues G410 and N414 each coordinate ADP.

This sequence belongs to the FGGY kinase family.

It catalyses the reaction glycerol + ATP = sn-glycerol 3-phosphate + ADP + H(+). Its pathway is polyol metabolism; glycerol degradation via glycerol kinase pathway; sn-glycerol 3-phosphate from glycerol: step 1/1. With respect to regulation, inhibited by fructose 1,6-bisphosphate (FBP). In terms of biological role, key enzyme in the regulation of glycerol uptake and metabolism. Catalyzes the phosphorylation of glycerol to yield sn-glycerol 3-phosphate. This Shewanella halifaxensis (strain HAW-EB4) protein is Glycerol kinase.